The primary structure comprises 131 residues: Small ribosomal subunit protein uS11 (131 aa).

Belongs to the universal ribosomal protein uS11 family. As to quaternary structure, part of the 30S ribosomal subunit. Interacts with proteins S7 and S18. Binds to IF-3.

Its function is as follows. Located on the platform of the 30S subunit, it bridges several disparate RNA helices of the 16S rRNA. Forms part of the Shine-Dalgarno cleft in the 70S ribosome. The polypeptide is Small ribosomal subunit protein uS11 (Dictyoglomus turgidum (strain DSM 6724 / Z-1310)).